We begin with the raw amino-acid sequence, 65 residues long: Kappa-scoloptoxin(04)-Ssd1a (65 aa).

The first 24 residues, 1–24, serve as a signal peptide directing secretion; that stretch reads MKKTCVVSVFLVLLLLKFHDLSMG. The propeptide occupies 25-36; the sequence is EEISPLKKVAPR. 2 disulfides stabilise this stretch: C42-C53 and C47-C60.

In terms of tissue distribution, expressed by the venom gland.

Its subcellular location is the secreted. Voltage-gated potassium channel inhibitor. In Scolopendra dehaani (Thai centipede), this protein is Kappa-scoloptoxin(04)-Ssd1a.